The primary structure comprises 333 residues: Homeobox protein HMX1 (333 aa).

3 disordered regions span residues Met1–Ala74, Gly86–Cys109, and Cys139–Thr204. The span at Asp17–Ala30 shows a compositional bias: polar residues. Gly residues predominate over residues Thr87 to Gly105. The span at Thr144–Arg158 shows a compositional bias: basic and acidic residues. The segment covering Ala159 to Ser176 has biased composition (gly residues). The segment covering Glu181 to Glu192 has biased composition (acidic residues). Residues Lys201–Leu260 constitute a DNA-binding region (homeobox). Positions Ala261–His271 match the HMX family specific domain 1 motif.

Belongs to the HMX homeobox family.

The protein localises to the nucleus. Functionally, DNA-binding protein that binds to the 5'-CAAG-3' core sequence. May function as a transcriptional repressor. Seems to act as a transcriptional antagonist of NKX2-5. May play an important role in the development of craniofacial structures such as the eye and ear. This is Homeobox protein HMX1 (HMX1) from Gallus gallus (Chicken).